We begin with the raw amino-acid sequence, 1184 residues long: Cartilage intermediate layer protein 1 (1184 aa).

The N-terminal stretch at Met1–Gly21 is a signal peptide. N-linked (GlcNAc...) asparagine glycosylation is found at Asn129 and Asn132. The 53-residue stretch at Glu149 to Thr201 folds into the TSP type-1 domain. 4 cysteine pairs are disulfide-bonded: Cys161–Cys195, Cys165–Cys200, Cys177–Cys185, and Cys330–Cys376. The region spanning Pro309–Ile395 is the Ig-like C2-type domain. Residues Asn346, Asn420, Asn550, Asn631, Asn1000, and Asn1056 are each glycosylated (N-linked (GlcNAc...) asparagine). The disordered stretch occupies residues Thr1136–Ala1170. The segment covering Ala1158–Ala1170 has biased composition (low complexity).

As to quaternary structure, monomer. Interacts with TGFB1. Post-translationally, cleaved into 2 chains possibly by a furin-like protease upon or preceding secretion. In terms of tissue distribution, specifically expressed in cartilage. Localizes in the intermediates layer of articular cartilage but neither in the superficial nor in the deepest regions. Specifically and highly expressed in intervertebral disk tissue. Expression increases with aging in hip articular cartilage. Overexpressed in articular hyaline cartilage from patients with calcium pyrophosphate dihydrate crystal deposition disease (CPPD). Expression in intervertebral disk tissue from individuals with lumbar disk disease increases as disk degeneration progresses.

It localises to the secreted. The protein localises to the extracellular space. It is found in the extracellular matrix. Its function is as follows. Probably plays a role in cartilage scaffolding. May act by antagonizing TGF-beta1 (TGFB1) and IGF1 functions. Has the ability to suppress IGF1-induced proliferation and sulfated proteoglycan synthesis, and inhibits ligand-induced IGF1R autophosphorylation. May inhibit TGFB1-mediated induction of cartilage matrix genes via its interaction with TGFB1. Overexpression may lead to impair chondrocyte growth and matrix repair and indirectly promote inorganic pyrophosphate (PPi) supersaturation in aging and osteoarthritis cartilage. This chain is Cartilage intermediate layer protein 1 (CILP), found in Homo sapiens (Human).